Consider the following 34-residue polypeptide: Toxin GTx1-15 (34 aa).

Cystine bridges form between Cys2–Cys17, Cys9–Cys23, and Cys16–Cys30. Residue Phe34 is modified to Phenylalanine amide.

The protein belongs to the neurotoxin 10 (Hwtx-1) family. 08 (Gtx1-15) subfamily. As to expression, expressed by the venom gland.

Its subcellular location is the secreted. In terms of biological role, potent voltage-gated sodium channel blocker. Potently inhibits the voltage-gated sodium channels Nav1.7/SCN9A (IC(50)=0.58-10 nM). Also shows a moderate activity on Nav1.1/SCN1A (IC(50)=6 nM), Nav1.2/SCN2A (IC(50)=5-128 nM), Nav1.3/SCN3A (IC(50)=20.3-170 nM), and Nav1.6/SCN8A (IC(50)=17-20.1 nM). Shows an unclear inhibition of Nav1.4/SCN4A (IC(50)=200 nM to &gt;10 uM), Nav1.5/SCN5A (IC(50)=140 nM to &gt;10 uM) and Nav1.8/SCN10A (IC(50)=68-12200 nM). Weakly blocks the low voltage-gated calcium channels Cav3.1/CACNA1G (30% inhibition of the peak current at 9.8 nM). shows moderate affinity for lipid bilayers. In vivo, when tested on the OD1-induced mouse model of Nav1.7/SCN9A-mediated pain, the toxin is effective when co-administered with OD1, but lacks efficacy when delivered systemically. This chain is Toxin GTx1-15, found in Grammostola porteri (Tarantula spider).